The chain runs to 616 residues: Dihydroxy-acid dehydratase (616 aa).

Asp81 contributes to the Mg(2+) binding site. [2Fe-2S] cluster is bound at residue Cys122. Mg(2+)-binding residues include Asp123 and Lys124. Residue Lys124 is modified to N6-carboxylysine. Position 195 (Cys195) interacts with [2Fe-2S] cluster. A Mg(2+)-binding site is contributed by Glu491. Catalysis depends on Ser517, which acts as the Proton acceptor.

It belongs to the IlvD/Edd family. Homodimer. It depends on [2Fe-2S] cluster as a cofactor. Mg(2+) serves as cofactor.

It carries out the reaction (2R)-2,3-dihydroxy-3-methylbutanoate = 3-methyl-2-oxobutanoate + H2O. The catalysed reaction is (2R,3R)-2,3-dihydroxy-3-methylpentanoate = (S)-3-methyl-2-oxopentanoate + H2O. It participates in amino-acid biosynthesis; L-isoleucine biosynthesis; L-isoleucine from 2-oxobutanoate: step 3/4. Its pathway is amino-acid biosynthesis; L-valine biosynthesis; L-valine from pyruvate: step 3/4. Its function is as follows. Functions in the biosynthesis of branched-chain amino acids. Catalyzes the dehydration of (2R,3R)-2,3-dihydroxy-3-methylpentanoate (2,3-dihydroxy-3-methylvalerate) into 2-oxo-3-methylpentanoate (2-oxo-3-methylvalerate) and of (2R)-2,3-dihydroxy-3-methylbutanoate (2,3-dihydroxyisovalerate) into 2-oxo-3-methylbutanoate (2-oxoisovalerate), the penultimate precursor to L-isoleucine and L-valine, respectively. The chain is Dihydroxy-acid dehydratase from Escherichia coli O8 (strain IAI1).